Here is a 135-residue protein sequence, read N- to C-terminus: Protein PilG (135 aa).

Positions 9-125 constitute a Response regulatory domain; it reads KVMVIDDSKT…ELLGAIKAHV (117 aa). Aspartate 58 carries the 4-aspartylphosphate modification.

In terms of processing, phosphorylated.

In terms of biological role, plays an essential role in both cAMP-dependent and independent regulation of twitching motility. Regulates the cAMP-independent coordination of type IV pilus (T4P) biogenesis and retraction that plays a role in surface and host cell adhesion, colonization, biofilm maturation, virulence, and twitching. In addition, phosphorylated PilG is necessary for cAMP production via regulation of the adenylate cyclase CyaB. Acts therefore as a response regulator of the chemosensory system/Chp system. The protein is Protein PilG (pilG) of Pseudomonas aeruginosa (strain ATCC 15692 / DSM 22644 / CIP 104116 / JCM 14847 / LMG 12228 / 1C / PRS 101 / PAO1).